Consider the following 768-residue polypeptide: Integrin beta-8 (768 aa).

An N-terminal signal peptide occupies residues 1-42 (MCGSALGLPPAAFVRLRSCRPGPAAFLRAAWVLSLVLGLGRS). The Extracellular portion of the chain corresponds to 43–683 (ENSRCASSHA…ECFSSPSYLR (641 aa)). The region spanning 46–95 (RCASSHAVSCSECLALGPDCGWCVHEDFISGGPRSERCDIVSNLISKGCP) is the PSI domain. 25 disulfides stabilise this stretch: cysteine 47-cysteine 65, cysteine 55-cysteine 469, cysteine 58-cysteine 83, cysteine 68-cysteine 94, cysteine 211-cysteine 218, cysteine 266-cysteine 307, cysteine 407-cysteine 419, cysteine 439-cysteine 467, cysteine 471-cysteine 491, cysteine 471-cysteine 494, cysteine 481-cysteine 494, cysteine 499-cysteine 528, cysteine 511-cysteine 526, cysteine 520-cysteine 531, cysteine 533-cysteine 546, cysteine 553-cysteine 567, cysteine 561-cysteine 572, cysteine 574-cysteine 583, cysteine 585-cysteine 609, cysteine 593-cysteine 607, cysteine 601-cysteine 612, cysteine 614-cysteine 624, cysteine 627-cysteine 630, cysteine 634-cysteine 661, and cysteine 640-cysteine 657. The VWFA domain maps to 146–384 (PVDLYYLVDV…NLVVEAYQKL (239 aa)). The Mg(2+) site is built by aspartate 154 and serine 156. Aspartate 193 serves as a coordination point for Ca(2+). The N-linked (GlcNAc...) asparagine glycan is linked to asparagine 233. Ca(2+) contacts are provided by asparagine 249, aspartate 251, proline 253, and glutamate 254. Glutamate 254 is a Mg(2+) binding site. N-linked (GlcNAc...) asparagine glycosylation occurs at asparagine 402. Asparagine 421, asparagine 431, and asparagine 456 each carry an N-linked (GlcNAc...) asparagine glycan. I-EGF domains lie at 471 to 495 (CEAS…PQCQ), 499 to 547 (CHQE…KYCE), 548 to 584 (KDDF…DRCQ), and 585 to 625 (CPSA…RFCE). Asparagine 648 is a glycosylation site (N-linked (GlcNAc...) asparagine). Residues 684-703 (IFFIIFIVTFLIGLLKILII) form a helical membrane-spanning segment. The Cytoplasmic segment spans residues 704–768 (RQVILQWNSS…NAHETFRCNF (65 aa)).

Belongs to the integrin beta chain family. In terms of assembly, heterodimer of an alpha and a beta subunit. Beta-8 (ITGB8) associates with alpha-V (ITGAV) to form ITGAV:ITGB8. ITGAV:ITGB8 interacts with TGFB1. As to expression, placenta, kidney, brain, ovary, uterus and in several transformed cells.

Its subcellular location is the cell membrane. Integrin alpha-V:beta-8 (ITGAV:ITGB8) is a receptor for fibronectin. It recognizes the sequence R-G-D in its ligands. Integrin alpha-V:beta-6 (ITGAV:ITGB6) mediates R-G-D-dependent release of transforming growth factor beta-1 (TGF-beta-1) from regulatory Latency-associated peptide (LAP), thereby playing a key role in TGF-beta-1 activation on the surface of activated regulatory T-cells (Tregs). Required during vasculogenesis. The sequence is that of Integrin beta-8 (ITGB8) from Oryctolagus cuniculus (Rabbit).